Reading from the N-terminus, the 200-residue chain is Putative 3-methyladenine DNA glycosylase (200 aa).

This sequence belongs to the DNA glycosylase MPG family.

In Methanocella arvoryzae (strain DSM 22066 / NBRC 105507 / MRE50), this protein is Putative 3-methyladenine DNA glycosylase.